The chain runs to 279 residues: MPEEISQYLFICFKSFFLGIIQGFTEFLPISSTAHLKVVPYLFGWNDLGVSFSASIQLGSAVAIIYYFRNQISLIINSFFSSFNPSKGFKDENSRLFIYIFVASIPILVFGLLIKLYWPNYSDSNLRGLFSIAITSIVMSLLLALSEIYGKRNKLFVDINLNDVIKLGLAQSLALFPGVSRSGITLTSALFSGIERKTAARLSFLVGIPAVSISGLVELFSLFRVLSVIDIIPIIIGIISSFFSSIFAIDLFLKFLSKNNTLVFVYYRLAFGIFILTTL.

Transmembrane regions (helical) follow at residues 10 to 30 (FICFKSFFLGIIQGFTEFLPI), 48 to 68 (LGVSFSASIQLGSAVAIIYYF), 96 to 116 (LFIYIFVASIPILVFGLLIKL), 128 to 148 (GLFSIAITSIVMSLLLALSEI), 203 to 223 (SFLVGIPAVSISGLVELFSLF), 229 to 249 (IDIIPIIIGIISSFFSSIFAI), and 259 to 279 (NNTLVFVYYRLAFGIFILTTL).

This sequence belongs to the UppP family.

Its subcellular location is the cell inner membrane. It carries out the reaction di-trans,octa-cis-undecaprenyl diphosphate + H2O = di-trans,octa-cis-undecaprenyl phosphate + phosphate + H(+). Its function is as follows. Catalyzes the dephosphorylation of undecaprenyl diphosphate (UPP). Confers resistance to bacitracin. This chain is Undecaprenyl-diphosphatase, found in Prochlorococcus marinus (strain NATL1A).